The chain runs to 273 residues: 29 kDa ribonucleoprotein A, chloroplastic (273 aa).

The N-terminal 58 residues, 1–58, are a transit peptide targeting the chloroplast; that stretch reads MASSASSLHFLSLTPQTLPLPKPTSQTTSLSFFSLPPSSLNLSLSSSSSCFSSRFVRK. Positions 87–165 constitute an RRM 1 domain; it reads LKIFVGNLPF…RALRVNSGPP (79 aa). Residues 156 to 181 form a disordered region; sequence RALRVNSGPPPEKRENSSFRGGSRGG. The segment at 166–187 is linker (Gly-rich); that stretch reads PEKRENSSFRGGSRGGGSFDSS. Residues 188–266 enclose the RRM 2 domain; it reads NRVYVGNLAW…RAIRVSPAEA (79 aa).

The protein resides in the plastid. Its subcellular location is the chloroplast. Its function is as follows. Could be involved in splicing and/or processing of chloroplast RNA's. In Nicotiana sylvestris (Wood tobacco), this protein is 29 kDa ribonucleoprotein A, chloroplastic.